A 225-amino-acid chain; its full sequence is Thymidine kinase (225 aa).

8 to 15 (GPMFSGKT) provides a ligand contact to ATP. The active-site Proton acceptor is E92. Y122 provides a ligand contact to substrate. 2 residues coordinate Zn(2+): C147 and C150. A substrate-binding site is contributed by 167 to 171 (KILVG). Zn(2+) contacts are provided by C180 and C183. A compositionally biased stretch (polar residues) spans 197–207 (SEQINNQTELS). Residues 197–225 (SEQINNQTELSEPTRQKESLKIKKRRIDS) are disordered. A compositionally biased stretch (basic and acidic residues) spans 208–225 (EPTRQKESLKIKKRRIDS).

The protein belongs to the thymidine kinase family.

The catalysed reaction is thymidine + ATP = dTMP + ADP + H(+). This chain is Thymidine kinase (TK), found in Acanthamoeba polyphaga mimivirus (APMV).